Here is a 658-residue protein sequence, read N- to C-terminus: MMELERRAYSKEVHQRLRKQVEEIRQLEMLRAKLQTQINVAQSQVKRLGDKKHLAEMECLLKSRAQVQVEIEALQEQNRALDKQIQDWETHVLTQSKEASAPDLIMYQKMKIQRRIRILEDQLDRVTCHFDIHLVRNAALREELELLRIERGRYLNMDRKLKKEIHLLREMVGALSTSSTSAYTAREEAKTKMGMLQERAEKELAQSDTEAQILLRQISHLEQLHRFLKLKNDERQPDPRVVQKAEQRDWEVSEGLRKTSQEKLVLRYEDTLGKLAQLTGESDPDLLVEKYLELEERNFAEFNFINEQNSEIHHLQEEIKEMQEALVSEHASQDKQRMQQEQQCKMLQQDVDKMCSESEQLEGRFQVLRGQLEKIKTDIQVLFDKAKCDSSVIKDLLGVKTYMRDRDIGLFLSTIERRLVQLLTVQAFLQVQNLAPLADAALLALGQSLQEPSKKTTPLKPPDTMEDSSGAVIKEDYPMSKEELLSQVMKSLQLQDEEESAKKLDSSPSLTLSSPQISLVTVPKHSKKTSVVPESILSHKTNRGRGTGSVSHVTFGDSASAAGPVAMASASASGAPVSSRSSQGGRGGFKPTSSSSYLGSTGYLETSRGRESTAGGVHSQSMGSELSRGLSSSSGHASSPAPPSRPSSSTSKDSRGYN.

3 coiled-coil regions span residues 11–156 (KEVH…RYLN), 186–234 (REEA…KNDE), and 303–380 (NFIN…TDIQ). 2 disordered regions span residues 496 to 552 (DEEE…SVSH) and 574 to 658 (GAPV…RGYN). Phosphoserine is present on residues serine 500, serine 506, serine 507, and serine 509. Composition is skewed to low complexity over residues 506–519 (SSPS…QISL), 574–583 (GAPVSSRSSQ), 592–604 (TSSS…TGYL), and 621–639 (SMGS…HASS).

The protein belongs to the ODA1/DCC2 family. In terms of assembly, component of the outer dynein arm-docking complex along with ODAD2, ODAD3, ODAD4 and CLXN. Interacts with ODAD3. Interacts with ODAD4; this interaction may facilitate the recruitment and/or attachment of outer dynein arm docking complex proteins including ODAD1, ODAD3, and ODAD4 to ciliary axonemes. Interacts with DNAH9. Interacts with MNS1. Interacts with PIERCE1 and PIERCE2; the interactions link the outer dynein arms docking complex (ODA-DC) to the internal microtubule inner proteins (MIP) in cilium axoneme. As to expression, expressed in motile ciliated tissues.

It is found in the cytoplasm. It localises to the cytoskeleton. The protein resides in the cilium axoneme. Its function is as follows. Component of the outer dynein arm-docking complex that mediates outer dynein arms (ODA) binding onto the doublet microtubule. Involved in mediating assembly of both ODAs and their axonemal docking complex onto ciliary microtubules. This chain is Outer dynein arm-docking complex subunit 1 (Odad1), found in Mus musculus (Mouse).